Here is a 119-residue protein sequence, read N- to C-terminus: Large ribosomal subunit protein uL22c (119 aa).

This sequence belongs to the universal ribosomal protein uL22 family. As to quaternary structure, part of the 50S ribosomal subunit.

The protein resides in the plastid. The protein localises to the chloroplast. This protein binds specifically to 23S rRNA. In terms of biological role, the globular domain of the protein is located near the polypeptide exit tunnel on the outside of the subunit, while an extended beta-hairpin is found that lines the wall of the exit tunnel in the center of the 70S ribosome. The sequence is that of Large ribosomal subunit protein uL22c (rpl22) from Anthoceros angustus (Hornwort).